The following is a 566-amino-acid chain: uncharacterized protein (566 aa).

This is an uncharacterized protein from Escherichia coli (strain K12).